The chain runs to 350 residues: 4-hydroxythreonine-4-phosphate dehydrogenase (350 aa).

Substrate is bound by residues histidine 138 and threonine 139. 3 residues coordinate a divalent metal cation: histidine 173, histidine 218, and histidine 273. Lysine 281, asparagine 290, and arginine 299 together coordinate substrate.

Belongs to the PdxA family. In terms of assembly, homodimer. Zn(2+) is required as a cofactor. It depends on Mg(2+) as a cofactor. Requires Co(2+) as cofactor.

Its subcellular location is the cytoplasm. It catalyses the reaction 4-(phosphooxy)-L-threonine + NAD(+) = 3-amino-2-oxopropyl phosphate + CO2 + NADH. It participates in cofactor biosynthesis; pyridoxine 5'-phosphate biosynthesis; pyridoxine 5'-phosphate from D-erythrose 4-phosphate: step 4/5. Functionally, catalyzes the NAD(P)-dependent oxidation of 4-(phosphooxy)-L-threonine (HTP) into 2-amino-3-oxo-4-(phosphooxy)butyric acid which spontaneously decarboxylates to form 3-amino-2-oxopropyl phosphate (AHAP). This is 4-hydroxythreonine-4-phosphate dehydrogenase from Xanthobacter autotrophicus (strain ATCC BAA-1158 / Py2).